Reading from the N-terminus, the 313-residue chain is Ribosomal RNA small subunit methyltransferase H (313 aa).

Residues 35–37, D55, F80, D102, and Q109 each bind S-adenosyl-L-methionine; that span reads GGH.

It belongs to the methyltransferase superfamily. RsmH family.

The protein localises to the cytoplasm. The enzyme catalyses cytidine(1402) in 16S rRNA + S-adenosyl-L-methionine = N(4)-methylcytidine(1402) in 16S rRNA + S-adenosyl-L-homocysteine + H(+). Specifically methylates the N4 position of cytidine in position 1402 (C1402) of 16S rRNA. This chain is Ribosomal RNA small subunit methyltransferase H, found in Shewanella amazonensis (strain ATCC BAA-1098 / SB2B).